The sequence spans 326 residues: Probable cell division protein WhiA (326 aa).

The segment at residues 275–308 is a DNA-binding region (H-T-H motif); that stretch reads SLEELGQLSDPPLTKDAVAGRIRRLLAMADKKAS.

This sequence belongs to the WhiA family.

Functionally, involved in cell division and chromosome segregation. In Beutenbergia cavernae (strain ATCC BAA-8 / DSM 12333 / CCUG 43141 / JCM 11478 / NBRC 16432 / NCIMB 13614 / HKI 0122), this protein is Probable cell division protein WhiA.